Consider the following 407-residue polypeptide: 4-hydroxy-3-methylbut-2-en-1-yl diphosphate synthase (ferredoxin) (407 aa).

[4Fe-4S] cluster contacts are provided by Cys312, Cys315, Cys346, and Glu353.

It belongs to the IspG family. [4Fe-4S] cluster serves as cofactor.

It catalyses the reaction (2E)-4-hydroxy-3-methylbut-2-enyl diphosphate + 2 oxidized [2Fe-2S]-[ferredoxin] + H2O = 2-C-methyl-D-erythritol 2,4-cyclic diphosphate + 2 reduced [2Fe-2S]-[ferredoxin] + H(+). Its pathway is isoprenoid biosynthesis; isopentenyl diphosphate biosynthesis via DXP pathway; isopentenyl diphosphate from 1-deoxy-D-xylulose 5-phosphate: step 5/6. Its function is as follows. Converts 2C-methyl-D-erythritol 2,4-cyclodiphosphate (ME-2,4cPP) into 1-hydroxy-2-methyl-2-(E)-butenyl 4-diphosphate. The sequence is that of 4-hydroxy-3-methylbut-2-en-1-yl diphosphate synthase (ferredoxin) from Synechococcus elongatus (strain ATCC 33912 / PCC 7942 / FACHB-805) (Anacystis nidulans R2).